The sequence spans 197 residues: NADH-quinone oxidoreductase subunit I 2 (197 aa).

4Fe-4S ferredoxin-type domains are found at residues 42 to 71 (GVIGLFEENCTVCMLCARECPDWCIYIDSH) and 91 to 120 (DRFAIDFALCMYCGICIEVCPFDALFWSPE). C51, C54, C57, C61, C100, C103, C106, and C110 together coordinate [4Fe-4S] cluster. The segment at 147 to 197 (APPALDPGAEEPKELAAARKAADKLAAQQQPDQPGPDHPGQPDESGQEGRT) is disordered. Over residues 156–169 (EEPKELAAARKAAD) the composition is skewed to basic and acidic residues.

It belongs to the complex I 23 kDa subunit family. As to quaternary structure, NDH-1 is composed of 14 different subunits. Subunits NuoA, H, J, K, L, M, N constitute the membrane sector of the complex. The cofactor is [4Fe-4S] cluster.

It localises to the cell membrane. The catalysed reaction is a quinone + NADH + 5 H(+)(in) = a quinol + NAD(+) + 4 H(+)(out). NDH-1 shuttles electrons from NADH, via FMN and iron-sulfur (Fe-S) centers, to quinones in the respiratory chain. The immediate electron acceptor for the enzyme in this species is believed to be ubiquinone. Couples the redox reaction to proton translocation (for every two electrons transferred, four hydrogen ions are translocated across the cytoplasmic membrane), and thus conserves the redox energy in a proton gradient. This Streptomyces coelicolor (strain ATCC BAA-471 / A3(2) / M145) protein is NADH-quinone oxidoreductase subunit I 2.